Reading from the N-terminus, the 679-residue chain is Methionine--tRNA ligase (679 aa).

The Zn(2+) site is built by C147, C150, C160, and C163. The short motif at 332–336 (KISTS) is the 'KMSKS' region element. Residue T335 participates in ATP binding. Residues 578–679 (DFMKLDIRVG…REVKPGSEVK (102 aa)) form the tRNA-binding domain.

This sequence belongs to the class-I aminoacyl-tRNA synthetase family. MetG type 1 subfamily. As to quaternary structure, homodimer. Zn(2+) is required as a cofactor.

The protein localises to the cytoplasm. The enzyme catalyses tRNA(Met) + L-methionine + ATP = L-methionyl-tRNA(Met) + AMP + diphosphate. Its function is as follows. Is required not only for elongation of protein synthesis but also for the initiation of all mRNA translation through initiator tRNA(fMet) aminoacylation. The chain is Methionine--tRNA ligase from Bacteroides fragilis (strain YCH46).